Here is a 262-residue protein sequence, read N- to C-terminus: Hydroxyethylthiazole kinase (262 aa).

M50 contributes to the substrate binding site. Positions 125 and 171 each coordinate ATP. Position 198 (G198) interacts with substrate.

It belongs to the Thz kinase family. Mg(2+) is required as a cofactor.

It catalyses the reaction 5-(2-hydroxyethyl)-4-methylthiazole + ATP = 4-methyl-5-(2-phosphooxyethyl)-thiazole + ADP + H(+). It functions in the pathway cofactor biosynthesis; thiamine diphosphate biosynthesis; 4-methyl-5-(2-phosphoethyl)-thiazole from 5-(2-hydroxyethyl)-4-methylthiazole: step 1/1. Its function is as follows. Catalyzes the phosphorylation of the hydroxyl group of 4-methyl-5-beta-hydroxyethylthiazole (THZ). This Shigella boydii serotype 4 (strain Sb227) protein is Hydroxyethylthiazole kinase.